Here is a 177-residue protein sequence, read N- to C-terminus: Large ribosomal subunit protein uL6 (177 aa).

It belongs to the universal ribosomal protein uL6 family. Part of the 50S ribosomal subunit.

Its function is as follows. This protein binds to the 23S rRNA, and is important in its secondary structure. It is located near the subunit interface in the base of the L7/L12 stalk, and near the tRNA binding site of the peptidyltransferase center. The protein is Large ribosomal subunit protein uL6 of Bordetella bronchiseptica (strain ATCC BAA-588 / NCTC 13252 / RB50) (Alcaligenes bronchisepticus).